The chain runs to 80 residues: Conotoxin Lt6.2 (80 aa).

Residues 1-24 (MKLTRVLIIAVLFLTAYQLTTVET) form the signal peptide. Residues 25-47 (YSRGKWMHRALRSTGKNPKVTRE) constitute a propeptide that is removed on maturation. 3 disulfide bridges follow: cysteine 48–cysteine 62, cysteine 55–cysteine 66, and cysteine 61–cysteine 73.

Belongs to the conotoxin O1 superfamily. As to expression, expressed by the venom duct.

Its subcellular location is the secreted. In Conus litteratus (Lettered cone), this protein is Conotoxin Lt6.2.